Reading from the N-terminus, the 317-residue chain is MNPQLTPDGRLRHLLTLDGLPRATLTHILDTAESFMDVGEREVKKVPLLRGKSIFNLFFEPSTRTRTTFEIAAKRLSADVVNLNIATSSQTKGEAILDTVDNLSAMHADMFIVRHSQSGAAHFIARHVAPHISVVNAGDGRHAHPTQGLLDMFTIRRFKGEFHNLTVAIVGDVLHSRVARSQIHALTTLGVPEVRVIGPKTLLPTGVEQLGVKVFHDMAAGLAGCDVVIMLRLQNERMKGARLPSAQEYFKFFGLTPEKLALAKPDAIVMHPGPMNRGVEIASEVADGPQSVILPQVTYGIAVRMAVMALLAGGAST.

Residues Arg64 and Thr65 each coordinate carbamoyl phosphate. Lys92 serves as a coordination point for L-aspartate. Carbamoyl phosphate-binding residues include Arg114, His144, and Gln147. Residues Arg177 and Arg232 each contribute to the L-aspartate site. Carbamoyl phosphate contacts are provided by Gly273 and Pro274.

It belongs to the aspartate/ornithine carbamoyltransferase superfamily. ATCase family. In terms of assembly, heterododecamer (2C3:3R2) of six catalytic PyrB chains organized as two trimers (C3), and six regulatory PyrI chains organized as three dimers (R2).

It carries out the reaction carbamoyl phosphate + L-aspartate = N-carbamoyl-L-aspartate + phosphate + H(+). It functions in the pathway pyrimidine metabolism; UMP biosynthesis via de novo pathway; (S)-dihydroorotate from bicarbonate: step 2/3. Functionally, catalyzes the condensation of carbamoyl phosphate and aspartate to form carbamoyl aspartate and inorganic phosphate, the committed step in the de novo pyrimidine nucleotide biosynthesis pathway. The chain is Aspartate carbamoyltransferase catalytic subunit from Thiobacillus denitrificans (strain ATCC 25259 / T1).